The chain runs to 261 residues: Cytochrome c oxidase subunit 3 (261 aa).

Residues 1 to 15 are Mitochondrial matrix-facing; the sequence is MAHQAHAYHMVDPSP. The helical transmembrane segment at 16 to 34 threads the bilayer; it reads WPLTGAIAALLMTSGLAIW. At 35 to 40 the chain is on the mitochondrial intermembrane side; the sequence is FHFHST. Residues 41–66 traverse the membrane as a helical segment; sequence TLMTLGLILLLLTMYQWWRDIIREGT. At 67-72 the chain is on the mitochondrial matrix side; sequence FQGHHT. The chain crosses the membrane as a helical span at residues 73–105; sequence PPVQKGLRYGMILFITSEVFFFLGFFWAFYHSS. Residues 106–128 are Mitochondrial intermembrane-facing; that stretch reads LAPTPELGGCWPPTGITPLDPFE. The helical transmembrane segment at 129–152 threads the bilayer; it reads VPLLNTAVLLASGVTVTWAHHSIM. The Mitochondrial matrix portion of the chain corresponds to 153–155; the sequence is EGE. The helical transmembrane segment at 156-183 threads the bilayer; the sequence is RKQAIQSLALTILLGLYFTALQAMEYYE. At 184–190 the chain is on the mitochondrial intermembrane side; that stretch reads APFTIAD. Residues 191 to 223 traverse the membrane as a helical segment; the sequence is GVYGSTFFVATGFHGLHVIIGSTFLAVCLLRQI. The Mitochondrial matrix segment spans residues 224–232; it reads QYHFTSEHH. Residues 233–256 form a helical membrane-spanning segment; the sequence is FGFEAAAWYWHFVDVVWLFLYVSI. The Mitochondrial intermembrane portion of the chain corresponds to 257–261; it reads YWWGS.

Belongs to the cytochrome c oxidase subunit 3 family. As to quaternary structure, component of the cytochrome c oxidase (complex IV, CIV), a multisubunit enzyme composed of 14 subunits. The complex is composed of a catalytic core of 3 subunits MT-CO1, MT-CO2 and MT-CO3, encoded in the mitochondrial DNA, and 11 supernumerary subunits COX4I, COX5A, COX5B, COX6A, COX6B, COX6C, COX7A, COX7B, COX7C, COX8 and NDUFA4, which are encoded in the nuclear genome. The complex exists as a monomer or a dimer and forms supercomplexes (SCs) in the inner mitochondrial membrane with NADH-ubiquinone oxidoreductase (complex I, CI) and ubiquinol-cytochrome c oxidoreductase (cytochrome b-c1 complex, complex III, CIII), resulting in different assemblies (supercomplex SCI(1)III(2)IV(1) and megacomplex MCI(2)III(2)IV(2)).

Its subcellular location is the mitochondrion inner membrane. The enzyme catalyses 4 Fe(II)-[cytochrome c] + O2 + 8 H(+)(in) = 4 Fe(III)-[cytochrome c] + 2 H2O + 4 H(+)(out). Functionally, component of the cytochrome c oxidase, the last enzyme in the mitochondrial electron transport chain which drives oxidative phosphorylation. The respiratory chain contains 3 multisubunit complexes succinate dehydrogenase (complex II, CII), ubiquinol-cytochrome c oxidoreductase (cytochrome b-c1 complex, complex III, CIII) and cytochrome c oxidase (complex IV, CIV), that cooperate to transfer electrons derived from NADH and succinate to molecular oxygen, creating an electrochemical gradient over the inner membrane that drives transmembrane transport and the ATP synthase. Cytochrome c oxidase is the component of the respiratory chain that catalyzes the reduction of oxygen to water. Electrons originating from reduced cytochrome c in the intermembrane space (IMS) are transferred via the dinuclear copper A center (CU(A)) of subunit 2 and heme A of subunit 1 to the active site in subunit 1, a binuclear center (BNC) formed by heme A3 and copper B (CU(B)). The BNC reduces molecular oxygen to 2 water molecules using 4 electrons from cytochrome c in the IMS and 4 protons from the mitochondrial matrix. The protein is Cytochrome c oxidase subunit 3 (mt-co3) of Cyprinus carpio (Common carp).